A 522-amino-acid chain; its full sequence is Aspartic and glutamic acid-rich protein (522 aa).

The N-terminal stretch at 1 to 16 (MKVFVYLLVTFSLTNA) is a signal peptide. Basic and acidic residues-rich tracts occupy residues 72-81 (YDDFFPKDTS) and 93-102 (SRNDDGYDLA). Residues 72–497 (YDDFFPKDTS…KSKDAAQGNI (426 aa)) form a disordered region. Acidic residues predominate over residues 109–125 (DDEEAYDDFDEVDDRAD). Residues 142–152 (KLPAEEESKND) are compositionally biased toward basic and acidic residues. Composition is skewed to acidic residues over residues 153–166 (MDEE…EEDK), 173–200 (FAED…EDEV), 228–261 (DNEE…DESD), and 267–283 (EVED…TEEG). Residues 284 to 343 (SEIKQNDETEEQPEKKFDADKEHEDAPEPLKEKLSDESKARAEDESDKSEDAAKEIKEPE) are compositionally biased toward basic and acidic residues. The stretch at 319 to 465 (DESKARAEDE…KSNLALKRDE (147 aa)) forms a coiled coil. The segment covering 358 to 374 (DEAELLDDEAELSDDEA) has biased composition (acidic residues). Basic and acidic residues-rich tracts occupy residues 375–397 (ELSK…KAEK), 407–453 (DEAK…EFAK), and 461–491 (LKRD…KSKD).

In terms of tissue distribution, component of the acid-soluble organic matrix of the aragonitic skeleton (at protein level).

Its subcellular location is the secreted. This chain is Aspartic and glutamic acid-rich protein, found in Acropora millepora (Staghorn coral).